The primary structure comprises 127 residues: Glycine cleavage system H protein (127 aa).

Residues 24-105 form the Lipoyl-binding domain; that stretch reads TVKVGISDHA…PYEAWLFAVR (82 aa). K65 carries the post-translational modification N6-lipoyllysine.

It belongs to the GcvH family. As to quaternary structure, the glycine cleavage system is composed of four proteins: P, T, L and H. Requires (R)-lipoate as cofactor.

Its function is as follows. The glycine cleavage system catalyzes the degradation of glycine. The H protein shuttles the methylamine group of glycine from the P protein to the T protein. The chain is Glycine cleavage system H protein from Methylococcus capsulatus (strain ATCC 33009 / NCIMB 11132 / Bath).